A 105-amino-acid chain; its full sequence is Vacuolar ATPase assembly integral membrane protein VMA21 homolog (105 aa).

A disordered region spans residues 1–26; that stretch reads MSTKNKKAAGGNGGAPKQTRQQSHDS. At 1–36 the chain is on the cytoplasmic side; sequence MSTKNKKAAGGNGGAPKQTRQQSHDSQDYSSFKTVL. A helical transmembrane segment spans residues 37–57; that stretch reads FYCMLIVFLPVLTFFVLKGFV. Residues 58–68 are Lumenal-facing; that stretch reads LDQFLDISEVK. The helical transmembrane segment at 69–89 threads the bilayer; that stretch reads VNIASAVGAVVALHIALGLYI. At 90 to 105 the chain is on the cytoplasmic side; it reads YRAYFGAPGSKGSKTD.

The protein belongs to the VMA21 family.

Its subcellular location is the endoplasmic reticulum membrane. It localises to the endoplasmic reticulum-Golgi intermediate compartment membrane. The protein localises to the cytoplasmic vesicle. The protein resides in the COPII-coated vesicle membrane. Required for the assembly of the V0 complex of the vacuolar ATPase (V-ATPase) in the endoplasmic reticulum. The polypeptide is Vacuolar ATPase assembly integral membrane protein VMA21 homolog (Drosophila simulans (Fruit fly)).